Consider the following 364-residue polypeptide: Methylthioribose-1-phosphate isomerase (364 aa).

Residues 53–55 (RGA), arginine 90, and glutamine 203 contribute to the substrate site. The active-site Proton donor is aspartate 244. Residue 254–255 (NK) participates in substrate binding.

Belongs to the eIF-2B alpha/beta/delta subunits family. MtnA subfamily.

It carries out the reaction 5-(methylsulfanyl)-alpha-D-ribose 1-phosphate = 5-(methylsulfanyl)-D-ribulose 1-phosphate. Its pathway is amino-acid biosynthesis; L-methionine biosynthesis via salvage pathway; L-methionine from S-methyl-5-thio-alpha-D-ribose 1-phosphate: step 1/6. In terms of biological role, catalyzes the interconversion of methylthioribose-1-phosphate (MTR-1-P) into methylthioribulose-1-phosphate (MTRu-1-P). This is Methylthioribose-1-phosphate isomerase from Sinorhizobium medicae (strain WSM419) (Ensifer medicae).